Consider the following 255-residue polypeptide: Acetyl-coenzyme A carboxylase carboxyl transferase subunit alpha (255 aa).

One can recognise a CoA carboxyltransferase C-terminal domain in the interval 1–235 (MNIAKIVREA…KKELQTELAR (235 aa)).

It belongs to the AccA family. Acetyl-CoA carboxylase is a heterohexamer composed of biotin carboxyl carrier protein (AccB), biotin carboxylase (AccC) and two subunits each of ACCase subunit alpha (AccA) and ACCase subunit beta (AccD).

Its subcellular location is the cytoplasm. The catalysed reaction is N(6)-carboxybiotinyl-L-lysyl-[protein] + acetyl-CoA = N(6)-biotinyl-L-lysyl-[protein] + malonyl-CoA. It participates in lipid metabolism; malonyl-CoA biosynthesis; malonyl-CoA from acetyl-CoA: step 1/1. Its function is as follows. Component of the acetyl coenzyme A carboxylase (ACC) complex. First, biotin carboxylase catalyzes the carboxylation of biotin on its carrier protein (BCCP) and then the CO(2) group is transferred by the carboxyltransferase to acetyl-CoA to form malonyl-CoA. The protein is Acetyl-coenzyme A carboxylase carboxyl transferase subunit alpha of Streptococcus pneumoniae serotype 19F (strain G54).